A 90-amino-acid chain; its full sequence is Probable Fe(2+)-trafficking protein (90 aa).

This sequence belongs to the Fe(2+)-trafficking protein family.

Its function is as follows. Could be a mediator in iron transactions between iron acquisition and iron-requiring processes, such as synthesis and/or repair of Fe-S clusters in biosynthetic enzymes. The polypeptide is Probable Fe(2+)-trafficking protein (Aliivibrio salmonicida (strain LFI1238) (Vibrio salmonicida (strain LFI1238))).